A 166-amino-acid polypeptide reads, in one-letter code: uncharacterized protein (166 aa).

Residue 117–124 (AAKSGGKT) coordinates ATP.

This is an uncharacterized protein from Mycoplasma pneumoniae (strain ATCC 29342 / M129 / Subtype 1) (Mycoplasmoides pneumoniae).